A 1147-amino-acid polypeptide reads, in one-letter code: MDFRANLQRQVKPKTVSEEERKVHSPQQVDFRSVLAKKGTPKTPVPEKAPPPKPATPDFRSVLGSKKKLPAENGSSNAEALNVKATESPKLVGNAPLSGSLKPVANAKPAETLKPVANTKPAETLKPVANAETLKPMGNAKPAESSKPVGNTKPAETLKPVGNTKPAETLKPVGNIKPAETLKPVGNIKPAETLKPVGNTKPTETLKPVANAKSAETLKPIANTKPAETLKPVGNAKPAETLKPVGNAKPAETLKPVGNAKPAETLKPVGNAKPAETLKAVANAKPAETPKPAGKEELKKEVQNDVNCKREKAGAADNEKPPASPGTAPTFKEKLQDVRVAEGEKLLLQCQVSSEPPATITWTLNGKTLKTTKFVILSQEGSLCSVSIEKALPEDRGLYKCVAKNAAPEAECSCHVTVHDAPASENAKAPEMKSRRPKSSLPPVLGTESDATVKKKPAPKTPPKAATPPQIPQFPEDQKVRAGERVELFGKVAGTQPITCTWMKFRKQIQDSEHIKVENSEAGSKLTILAARQEHCGCYTLLVENKLGSRQAQVNLTVVDKPDPPAGTPCASDIRSSSLTLSWYGSSYDGGSAVQSYSVEIWDSVDKMWTELATCRSTSFNVRDLLPDREYKFRVRAINVYGTSEPSQESELTTVGEKPEEPKDEVEEVSDDDEKEPEVDYRTVTVNTEQKVSDFYDIEERLGSGKFGQVFRLVEKKTGKIWAGKFFKAYSAKEKENIPAEIGIMNCLHHPKLVQCVDAFEEKANIVMVLEIVSGGELFERIIDEDFELTERECIKYMRQISEGVEYIHKQGIVHLDLKPENIMCVNKTGTRIKLIDFGLARRLENAGSLKVLFGTPEFVAPEVINYEPISYATDMWSIGVICYILVSGLSPFMGDNDNETLANVTSATWDFDDEAFDEISDDAKDFISNLLKKDMKNRLDCTQCLQHPWLMKDTKNMEAKKLSKDRMKKYMARRKWQKTGNAVRAIGRLSSMAMISGLSGRKSSTGSPTSPLTAERLETEEDVSQAFLEAVAEEKPHVKPYFSKTIRDLEVVEGSAARFDCKIEGYPDPEVVWFKDDQSIRESRHFQIDYDEDGNCSLIISDVCGDDDAKYTCKAVNSLGEATCTAELIVETMEEGEGEGEEEEEE.

The tract at residues 1-41 is actin-binding; that stretch reads MDFRANLQRQVKPKTVSEEERKVHSPQQVDFRSVLAKKGTP. Residues 1 to 330 are disordered; it reads MDFRANLQRQ…PPASPGTAPT (330 aa). The interval 26-41 is calmodulin-binding; sequence PQQVDFRSVLAKKGTP. Residues 43–55 show a composition bias toward pro residues; it reads TPVPEKAPPPKPA. Tandem repeats lie at residues 100–111 and 112–123. A 16 X 12 AA tandem repeats region spans residues 100 to 288; that stretch reads SLKPVANAKP…KAVANAKPAE (189 aa). The stretch at 124-132 is one 3; truncated repeat; the sequence is TLKPVANAE. A run of 13 repeats spans residues 133–144, 145–156, 157–168, 169–180, 181–192, 193–204, 205–216, 217–228, 229–240, 241–252, 253–264, 265–276, and 277–288. Positions 292-692 are actin-binding (calcium/calmodulin-insensitive); the sequence is PAGKEELKKE…TVTVNTEQKV (401 aa). The segment covering 293 to 320 has biased composition (basic and acidic residues); that stretch reads AGKEELKKEVQNDVNCKREKAGAADNEK. Ig-like C2-type domains are found at residues 329-417 and 469-557; these read PTFK…CHVT and PQIP…VNLT. The cysteines at positions 350 and 401 are disulfide-linked. Disordered stretches follow at residues 424 to 476 and 644 to 678; these read SENA…QFPE and SEPSQESELTTVGEKPEEPKDEVEEVSDDDEKEPE. Residues 459–472 show a composition bias toward pro residues; sequence PKTPPKAATPPQIP. The Fibronectin type-III domain maps to 565-657; it reads PAGTPCASDI…QESELTTVGE (93 aa). Positions 644–653 are enriched in polar residues; sequence SEPSQESELT. Residues 662-677 show a composition bias toward acidic residues; sequence PKDEVEEVSDDDEKEP. At serine 670 the chain carries Phosphoserine. Tyrosine 681 bears the Phosphotyrosine; by ABL1 mark. The region spanning 696 to 951 is the Protein kinase domain; it reads YDIEERLGSG…CTQCLQHPWL (256 aa). ATP-binding positions include 702 to 710 and lysine 725; that span reads LGSGKFGQV. Tyrosine 807 bears the Phosphotyrosine; by ABL1 mark. Aspartate 817 acts as the Proton acceptor in catalysis. Tyrosine 867 is modified (phosphotyrosine; by ABL1). The interval 943–1006 is calmodulin-binding; the sequence is TQCLQHPWLM…SGLSGRKSST (64 aa). Phosphoserine occurs at positions 991, 992, 1004, 1005, and 1008. The disordered stretch occupies residues 999–1019; the sequence is LSGRKSSTGSPTSPLTAERLE. Positions 1002–1013 are enriched in polar residues; the sequence is RKSSTGSPTSPL. Phosphothreonine is present on threonine 1010. A Phosphoserine modification is found at serine 1011. An Ig-like C2-type 3 domain is found at 1041 to 1130; that stretch reads PYFSKTIRDL…GEATCTAELI (90 aa). Residues cysteine 1062 and cysteine 1114 are joined by a disulfide bond.

The protein belongs to the protein kinase superfamily. CAMK Ser/Thr protein kinase family. As to quaternary structure, all isoforms including Telokin bind calmodulin. Interacts with SVIL. Interacts with CTTN; this interaction is reduced during thrombin-induced endothelial cell (EC) contraction but is promoted by the barrier-protective agonist sphingosine 1-phosphate (S1P) within lamellipodia. A complex made of ABL1, CTTN and MYLK regulates cortical actin-based cytoskeletal rearrangement critical to sphingosine 1-phosphate (S1P)-mediated endothelial cell (EC) barrier enhancement. Binds to NAA10/ARD1 and PTK2B/PYK2. Mg(2+) serves as cofactor. Requires Ca(2+) as cofactor. The C-terminus is deglutamylated by AGTPBP1/CCP1, AGBL1/CCP4 and AGBL4/CCP6, leading to the formation of Myosin light chain kinase, smooth muscle, deglutamylated form. The consequences of C-terminal deglutamylation are unknown. Post-translationally, can probably be down-regulated by phosphorylation. Tyrosine phosphorylation by ABL1 increases kinase activity, reverses MLCK-mediated inhibition of Arp2/3-mediated actin polymerization, and enhances CTTN-binding. Phosphorylation by SRC promotes CTTN binding. As to expression, isoform Telokin is found in all smooth muscle tested except the aorta. It is not present in non-muscle tissue.

It is found in the cytoplasm. The protein localises to the cell projection. The protein resides in the lamellipodium. Its subcellular location is the cleavage furrow. It localises to the cytoskeleton. It is found in the stress fiber. It catalyses the reaction L-seryl-[myosin light chain] + ATP = O-phospho-L-seryl-[myosin light chain] + ADP + H(+). The enzyme catalyses L-threonyl-[myosin light chain] + ATP = O-phospho-L-threonyl-[myosin light chain] + ADP + H(+). All catalytically active isoforms require binding to calcium and calmodulin for activation. Functionally, calcium/calmodulin-dependent myosin light chain kinase implicated in smooth muscle contraction via phosphorylation of myosin light chains (MLC). Also regulates actin-myosin interaction through a non-kinase activity. Phosphorylates PTK2B/PYK2 and myosin light-chains. Involved in the inflammatory response (e.g. apoptosis, vascular permeability, leukocyte diapedesis), cell motility and morphology, airway hyperreactivity and other activities relevant to asthma. Required for tonic airway smooth muscle contraction that is necessary for physiological and asthmatic airway resistance. Necessary for gastrointestinal motility. Implicated in the regulation of endothelial as well as vascular permeability, probably via the regulation of cytoskeletal rearrangements. In the nervous system it has been shown to control the growth initiation of astrocytic processes in culture and to participate in transmitter release at synapses formed between cultured sympathetic ganglion cells. Critical participant in signaling sequences that result in fibroblast apoptosis. Plays a role in the regulation of epithelial cell survival. Required for epithelial wound healing, especially during actomyosin ring contraction during purse-string wound closure. Mediates RhoA-dependent membrane blebbing. Triggers TRPC5 channel activity in a calcium-dependent signaling, by inducing its subcellular localization at the plasma membrane. Promotes cell migration (including tumor cells) and tumor metastasis. PTK2B/PYK2 activation by phosphorylation mediates ITGB2 activation and is thus essential to trigger neutrophil transmigration during acute lung injury (ALI). May regulate optic nerve head astrocyte migration. Probably involved in mitotic cytoskeletal regulation. Regulates tight junction probably by modulating ZO-1 exchange in the perijunctional actomyosin ring. Mediates burn-induced microvascular barrier injury; triggers endothelial contraction in the development of microvascular hyperpermeability by phosphorylating MLC. Essential for intestinal barrier dysfunction. Mediates Giardia spp.-mediated reduced epithelial barrier function during giardiasis intestinal infection via reorganization of cytoskeletal F-actin and tight junctional ZO-1. Necessary for hypotonicity-induced Ca(2+) entry and subsequent activation of volume-sensitive organic osmolyte/anion channels (VSOAC) in cervical cancer cells. The chain is Myosin light chain kinase, smooth muscle (MYLK) from Oryctolagus cuniculus (Rabbit).